The following is a 969-amino-acid chain: UvrABC system protein A (969 aa).

32–39 (GLSGSGKS) contributes to the ATP binding site. A C4-type zinc finger spans residues 258 to 286 (CPNGHPLAVDDLEPRSFSFNSPYGACPEC). ABC transporter domains follow at residues 316–599 (WSAG…KDSI) and 619–948 (VDRK…KFLA). 652-659 (GVSGSGKS) provides a ligand contact to ATP. The C4-type zinc-finger motif lies at 751-777 (CEACTGDGTIKIEMNFLPDVYVPCEVC).

It belongs to the ABC transporter superfamily. UvrA family. Forms a heterotetramer with UvrB during the search for lesions.

It localises to the cytoplasm. Its function is as follows. The UvrABC repair system catalyzes the recognition and processing of DNA lesions. UvrA is an ATPase and a DNA-binding protein. A damage recognition complex composed of 2 UvrA and 2 UvrB subunits scans DNA for abnormalities. When the presence of a lesion has been verified by UvrB, the UvrA molecules dissociate. The sequence is that of UvrABC system protein A from Mycobacterium leprae (strain TN).